A 725-amino-acid polypeptide reads, in one-letter code: Polyribonucleotide nucleotidyltransferase (725 aa).

2 residues coordinate Mg(2+): Asp487 and Asp493. The KH domain occupies 554 to 613 (PRIETMQIPTDKIREVIGTGGKVIREIVEKTGAKIDIQDTGVVKIASSDGKAIKAAYNWI). Residues 623–691 (GMIYDGTVVK…ERGKIRLSMK (69 aa)) enclose the S1 motif domain. The interval 699–725 (EDLTEKLKAEREADRNRERQARQSAGE) is disordered. Basic and acidic residues predominate over residues 701 to 719 (LTEKLKAEREADRNRERQA).

This sequence belongs to the polyribonucleotide nucleotidyltransferase family. Requires Mg(2+) as cofactor.

It localises to the cytoplasm. It carries out the reaction RNA(n+1) + phosphate = RNA(n) + a ribonucleoside 5'-diphosphate. In terms of biological role, involved in mRNA degradation. Catalyzes the phosphorolysis of single-stranded polyribonucleotides processively in the 3'- to 5'-direction. The protein is Polyribonucleotide nucleotidyltransferase of Methylobacterium sp. (strain 4-46).